A 184-amino-acid polypeptide reads, in one-letter code: Photosystem I assembly protein Ycf4 (184 aa).

Transmembrane regions (helical) follow at residues 20-40 (GNFF…VVGI) and 64-84 (IVMS…WCTI).

Belongs to the Ycf4 family.

It localises to the plastid. The protein localises to the chloroplast thylakoid membrane. Seems to be required for the assembly of the photosystem I complex. In Citrus sinensis (Sweet orange), this protein is Photosystem I assembly protein Ycf4.